The sequence spans 404 residues: MREVPQVLGIVLAGGEGKRLYPLTADRAKPAVPFGGAYRLVDFVLSNLVNARYLRICVLTQYKSHSLDRHISQNWRLSGLAGEYITPVPAQQRFGPHWYTGSADAIYQSLNLIYDEDPDYLVVFGADHVYRMDPEQMLRFHIGSGAGATVAGIRVPRSDATAFGCIDADDSGRIRRFTEKPLKPPGTPDDPDKTFVSMGNYIFTTKVLVDAIRADADDDHSYHDMGGDILPRLVDGGMAAVYDFSQNEVPGATDWDRAYWRDVGTLDAFYDAHMDLVSLRPVFNLYNKRWPIRGESENLAPAKFVNGGSVQESVVGAGSIISAASVRNSVLSSNVVVDNGAIVEGSVIMPGARVGRGAVIRHAILDKNVVVGPGEMVGVDPERDREHFAISAGGVVVVGKGVWI.

Residues Y99, G164, 179 to 180, and S197 each bind alpha-D-glucose 1-phosphate; that span reads EK.

This sequence belongs to the bacterial/plant glucose-1-phosphate adenylyltransferase family.

It catalyses the reaction alpha-D-glucose 1-phosphate + ATP + H(+) = ADP-alpha-D-glucose + diphosphate. Its pathway is capsule biogenesis; capsule polysaccharide biosynthesis. The protein operates within glycan biosynthesis; glycogen biosynthesis. Involved in the biosynthesis of ADP-glucose, a building block, required in the biosynthesis of maltose-1-phosphate (M1P) and in the elongation reactions to produce linear alpha-1,4-glucans. Catalyzes the reaction between ATP and alpha-D-glucose 1-phosphate (G1P) to produce pyrophosphate and ADP-Glc. In Mycobacterium leprae (strain Br4923), this protein is Glucose-1-phosphate adenylyltransferase.